The sequence spans 287 residues: Inorganic pyrophosphatase (287 aa).

Arg79 is a binding site for diphosphate. Mg(2+) contacts are provided by Asp116, Asp121, and Asp153.

It belongs to the PPase family. Requires Mg(2+) as cofactor.

The protein resides in the cytoplasm. It carries out the reaction diphosphate + H2O = 2 phosphate + H(+). This Zygosaccharomyces bailii protein is Inorganic pyrophosphatase (IPP1).